Here is a 164-residue protein sequence, read N- to C-terminus: Phosphopantetheine adenylyltransferase (164 aa).

Residue Ser-9 coordinates substrate. ATP is bound by residues 9–10 and His-17; that span reads SF. Residues Lys-41, Leu-73, and Lys-87 each coordinate substrate. Residues 88–90, Glu-98, and 123–129 contribute to the ATP site; these read GLR and NSFLSSS.

The protein belongs to the bacterial CoaD family. In terms of assembly, homohexamer. Mg(2+) serves as cofactor.

It localises to the cytoplasm. The catalysed reaction is (R)-4'-phosphopantetheine + ATP + H(+) = 3'-dephospho-CoA + diphosphate. The protein operates within cofactor biosynthesis; coenzyme A biosynthesis; CoA from (R)-pantothenate: step 4/5. Its function is as follows. Reversibly transfers an adenylyl group from ATP to 4'-phosphopantetheine, yielding dephospho-CoA (dPCoA) and pyrophosphate. The polypeptide is Phosphopantetheine adenylyltransferase (Clostridium kluyveri (strain ATCC 8527 / DSM 555 / NBRC 12016 / NCIMB 10680 / K1)).